The sequence spans 215 residues: Proteasome subunit beta type-1 (215 aa).

The residue at position 1 (M1) is an N-acetylmethionine. Positions 1-19 (MNGIQVDINRLKKGEVSLG) are cleaved as a propeptide — removed in mature form. Catalysis depends on T20, which acts as the Nucleophile.

The protein belongs to the peptidase T1B family. In terms of assembly, the 26S proteasome consists of a 20S proteasome core and two 19S regulatory subunits. The 20S proteasome core is composed of 28 subunits that are arranged in four stacked rings, resulting in a barrel-shaped structure. The two end rings are each formed by seven alpha subunits, and the two central rings are each formed by seven beta subunits. The catalytic chamber with the active sites is on the inside of the barrel.

The protein resides in the cytoplasm. The protein localises to the nucleus. It carries out the reaction Cleavage of peptide bonds with very broad specificity.. In terms of biological role, the proteasome degrades poly-ubiquitinated proteins in the cytoplasm and in the nucleus. It is essential for the regulated turnover of proteins and for the removal of misfolded proteins. The proteasome is a multicatalytic proteinase complex that is characterized by its ability to cleave peptides with Arg, Phe, Tyr, Leu, and Glu adjacent to the leaving group at neutral or slightly basic pH. It has an ATP-dependent proteolytic activity. PRE3 and PRE4 are necessary for the peptidyl-glutamyl-peptide-hydrolyzing activity. Its function is as follows. This subunit is necessary for the peptidylglutamyl-peptide hydrolyzing activity. The polypeptide is Proteasome subunit beta type-1 (PRE3) (Saccharomyces cerevisiae (strain ATCC 204508 / S288c) (Baker's yeast)).